Consider the following 237-residue polypeptide: Ribonuclease PH (237 aa).

Residues Arg86 and 124 to 126 (GTR) contribute to the phosphate site.

This sequence belongs to the RNase PH family. In terms of assembly, homohexameric ring arranged as a trimer of dimers.

The catalysed reaction is tRNA(n+1) + phosphate = tRNA(n) + a ribonucleoside 5'-diphosphate. Its function is as follows. Phosphorolytic 3'-5' exoribonuclease that plays an important role in tRNA 3'-end maturation. Removes nucleotide residues following the 3'-CCA terminus of tRNAs; can also add nucleotides to the ends of RNA molecules by using nucleoside diphosphates as substrates, but this may not be physiologically important. Probably plays a role in initiation of 16S rRNA degradation (leading to ribosome degradation) during starvation. The sequence is that of Ribonuclease PH from Methylorubrum populi (strain ATCC BAA-705 / NCIMB 13946 / BJ001) (Methylobacterium populi).